A 180-amino-acid chain; its full sequence is MASTSSLLNFLSPLFPSNTSLPPSSNPKFPNPNSLSSQQNSISISSKKHENAAIAKKEEYPGDLMAVVCPSLAFSNTLYFRSAYNVQVLVDDNENEERLLNRFRREVMRAGVIQECKRRRYFENKQEEKKRKHREAAKRNSRRRRGPFRGPFPGKEEATKVDKKEDDGDNWDMPEGGAPF.

The N-terminal 79 residues, 1–79, are a transit peptide targeting the chloroplast; the sequence is MASTSSLLNF…PSLAFSNTLY (79 aa). Positions 14 to 45 are enriched in low complexity; it reads LFPSNTSLPPSSNPKFPNPNSLSSQQNSISIS. Disordered regions lie at residues 14–49 and 124–180; these read LFPS…SKKH and NKQE…GAPF. Positions 130-147 are enriched in basic residues; that stretch reads KRKHREAAKRNSRRRRGP. Positions 154–166 are enriched in basic and acidic residues; the sequence is GKEEATKVDKKED.

In terms of assembly, component of the chloroplast small ribosomal subunit (SSU). Mature 70S chloroplast ribosomes of higher plants consist of a small (30S) and a large (50S) subunit. The 30S small subunit contains 1 molecule of ribosomal RNA (16S rRNA) and 24 different proteins. The 50S large subunit contains 3 rRNA molecules (23S, 5S and 4.5S rRNA) and 33 different proteins. bS21c binds directly to 16S ribosomal RNA.

The protein resides in the plastid. It localises to the chloroplast. Component of the chloroplast ribosome (chloro-ribosome), a dedicated translation machinery responsible for the synthesis of chloroplast genome-encoded proteins, including proteins of the transcription and translation machinery and components of the photosynthetic apparatus. This chain is Small ribosomal subunit protein bS21c (rps21), found in Spinacia oleracea (Spinach).